A 390-amino-acid chain; its full sequence is GPI inositol-deacylase (390 aa).

The helical transmembrane segment at 21–41 threads the bilayer; it reads FIVYFIICLTIIISALGVYLY. Ser202 is a catalytic residue. Residues 354 to 374 form a helical membrane-spanning segment; sequence VHLLSLTIFALKWTIIVLAII.

It belongs to the GPI inositol-deacylase family.

It is found in the endoplasmic reticulum membrane. Involved in inositol deacylation of GPI-anchored proteins which plays important roles in the quality control and ER-associated degradation of GPI-anchored proteins. The polypeptide is GPI inositol-deacylase (BST1) (Candida albicans (strain SC5314 / ATCC MYA-2876) (Yeast)).